A 218-amino-acid chain; its full sequence is Small ribosomal subunit protein uS3c (218 aa).

Positions 47-118 constitute a KH type-2 domain; that stretch reads VQKNIRISSG…KLNIAITRIS (72 aa).

The protein belongs to the universal ribosomal protein uS3 family. In terms of assembly, part of the 30S ribosomal subunit.

The protein localises to the plastid. The protein resides in the chloroplast. In Nasturtium officinale (Watercress), this protein is Small ribosomal subunit protein uS3c (rps3).